A 450-amino-acid polypeptide reads, in one-letter code: Tubulin alpha chain (450 aa).

Glutamine 11 serves as a coordination point for GTP. Position 40 is an N6-acetyllysine (lysine 40). GTP is bound by residues glutamate 71, glycine 144, threonine 145, threonine 179, asparagine 206, and asparagine 228. A Mg(2+)-binding site is contributed by glutamate 71. The active site involves glutamate 254.

This sequence belongs to the tubulin family. Dimer of alpha and beta chains. A typical microtubule is a hollow water-filled tube with an outer diameter of 25 nm and an inner diameter of 15 nM. Alpha-beta heterodimers associate head-to-tail to form protofilaments running lengthwise along the microtubule wall with the beta-tubulin subunit facing the microtubule plus end conferring a structural polarity. Microtubules usually have 13 protofilaments but different protofilament numbers can be found in some organisms and specialized cells. It depends on Mg(2+) as a cofactor. Post-translationally, undergoes a tyrosination/detyrosination cycle, the cyclic removal and re-addition of a C-terminal tyrosine residue by the enzymes tubulin tyrosine carboxypeptidase (TTCP) and tubulin tyrosine ligase (TTL), respectively. In terms of processing, acetylation of alpha chains at Lys-40 stabilizes microtubules and affects affinity and processivity of microtubule motors. This modification has a role in multiple cellular functions, ranging from cell motility, cell cycle progression or cell differentiation to intracellular trafficking and signaling.

Its subcellular location is the cytoplasm. It localises to the cytoskeleton. It catalyses the reaction GTP + H2O = GDP + phosphate + H(+). In terms of biological role, tubulin is the major constituent of microtubules, a cylinder consisting of laterally associated linear protofilaments composed of alpha- and beta-tubulin heterodimers. Microtubules grow by the addition of GTP-tubulin dimers to the microtubule end, where a stabilizing cap forms. Below the cap, tubulin dimers are in GDP-bound state, owing to GTPase activity of alpha-tubulin. This chain is Tubulin alpha chain (TUBA), found in Prunus dulcis (Almond).